The following is a 196-amino-acid chain: FMN-dependent NADH:quinone oxidoreductase (196 aa).

Position 10 (serine 10) interacts with FMN.

It belongs to the azoreductase type 1 family. As to quaternary structure, homodimer. FMN serves as cofactor.

The enzyme catalyses 2 a quinone + NADH + H(+) = 2 a 1,4-benzosemiquinone + NAD(+). It catalyses the reaction N,N-dimethyl-1,4-phenylenediamine + anthranilate + 2 NAD(+) = 2-(4-dimethylaminophenyl)diazenylbenzoate + 2 NADH + 2 H(+). In terms of biological role, quinone reductase that provides resistance to thiol-specific stress caused by electrophilic quinones. Also exhibits azoreductase activity. Catalyzes the reductive cleavage of the azo bond in aromatic azo compounds to the corresponding amines. The protein is FMN-dependent NADH:quinone oxidoreductase of Cereibacter sphaeroides (strain ATCC 17029 / ATH 2.4.9) (Rhodobacter sphaeroides).